The following is a 57-amino-acid chain: AAKYCKLPVRYGPCKKKIPSFYYKWKAKQCLPFDYSGCGGNANRFKTIEECRRTCVG.

A BPTI/Kunitz inhibitor domain is found at 5-55 (CKLPVRYGPCKKKIPSFYYKWKAKQCLPFDYSGCGGNANRFKTIEECRRTC). Disulfide bonds link Cys5-Cys55, Cys14-Cys38, and Cys30-Cys51.

This sequence belongs to the venom Kunitz-type family. As to expression, expressed by the venom gland.

The protein resides in the secreted. Serine protease inhibitor homolog that blocks voltage-gated potassium channels (Kv). The protein is Kunitz-type serine protease inhibitor homolog delta-dendrotoxin of Dendroaspis angusticeps (Eastern green mamba).